Reading from the N-terminus, the 748-residue chain is Phytochrome-like protein Cph1 (748 aa).

The PAS domain occupies 19-86; that stretch reads AIHTAHLIQP…IQSRLTAGQI (68 aa). A chromophore binding domain region spans residues 87 to 510; it reads SSLNPSKLWA…KKAIVNLILR (424 aa). Positions 152–320 constitute a GAF domain; that stretch reads NLRDFYDVIV…VVFSNISAQE (169 aa). Cysteine 259 is a binding site for a tetrapyrrole. In terms of domain architecture, Histidine kinase spans 535–748; the sequence is IASHDLQEPL…TFYFSIPIGN (214 aa). Phosphohistidine; by autocatalysis is present on histidine 538.

This sequence in the N-terminal section; belongs to the phytochrome family. In terms of assembly, homodimer. In terms of processing, contains one covalently linked tetrapyrrole chromophore.

It carries out the reaction ATP + protein L-histidine = ADP + protein N-phospho-L-histidine.. Functionally, regulatory photoreceptor which exists in two forms that are reversibly interconvertible by light: the R form that absorbs maximally in the red region of the spectrum and the FR form that absorbs maximally in the far-red region. Also has a slight blue shift for the far-red maximum. Forms a two-component system with the Rrcp1 response regulator. This Synechocystis sp. (strain ATCC 27184 / PCC 6803 / Kazusa) protein is Phytochrome-like protein Cph1 (cph1).